The primary structure comprises 268 residues: 4-hydroxy-tetrahydrodipicolinate reductase (268 aa).

NAD(+) contacts are provided by residues 7–12 (GAGGRM) and E33. R34 contributes to the NADP(+) binding site. Residues 97 to 99 (GTT) and 121 to 124 (SGNM) each bind NAD(+). H155 acts as the Proton donor/acceptor in catalysis. H156 provides a ligand contact to (S)-2,3,4,5-tetrahydrodipicolinate. K159 serves as the catalytic Proton donor. 165–166 (GT) lines the (S)-2,3,4,5-tetrahydrodipicolinate pocket.

This sequence belongs to the DapB family.

It localises to the cytoplasm. It carries out the reaction (S)-2,3,4,5-tetrahydrodipicolinate + NAD(+) + H2O = (2S,4S)-4-hydroxy-2,3,4,5-tetrahydrodipicolinate + NADH + H(+). The catalysed reaction is (S)-2,3,4,5-tetrahydrodipicolinate + NADP(+) + H2O = (2S,4S)-4-hydroxy-2,3,4,5-tetrahydrodipicolinate + NADPH + H(+). The protein operates within amino-acid biosynthesis; L-lysine biosynthesis via DAP pathway; (S)-tetrahydrodipicolinate from L-aspartate: step 4/4. In terms of biological role, catalyzes the conversion of 4-hydroxy-tetrahydrodipicolinate (HTPA) to tetrahydrodipicolinate. The protein is 4-hydroxy-tetrahydrodipicolinate reductase of Brucella abortus (strain 2308).